A 440-amino-acid chain; its full sequence is L-seryl-tRNA(Sec) selenium transferase (440 aa).

K282 carries the post-translational modification N6-(pyridoxal phosphate)lysine.

The protein belongs to the SelA family. Pyridoxal 5'-phosphate is required as a cofactor.

Its subcellular location is the cytoplasm. It carries out the reaction L-seryl-tRNA(Sec) + selenophosphate + H(+) = L-selenocysteinyl-tRNA(Sec) + phosphate. The protein operates within aminoacyl-tRNA biosynthesis; selenocysteinyl-tRNA(Sec) biosynthesis; selenocysteinyl-tRNA(Sec) from L-seryl-tRNA(Sec) (bacterial route): step 1/1. Its function is as follows. Converts seryl-tRNA(Sec) to selenocysteinyl-tRNA(Sec) required for selenoprotein biosynthesis. The chain is L-seryl-tRNA(Sec) selenium transferase from Campylobacter jejuni subsp. doylei (strain ATCC BAA-1458 / RM4099 / 269.97).